Here is a 154-residue protein sequence, read N- to C-terminus: Protein X (154 aa).

Residues 68–117 (PCALRFTSARRMETTVNAPQSLPTPLHKRTLGLSPRSTTWIEEYIKDCVF) form a mitochondrial targeting sequence region.

The protein belongs to the orthohepadnavirus protein X family. As to quaternary structure, may form homodimer. May interact with host CEBPA, CFLAR, CREB1, DDB1, E4F1, HBXIP, HSPD1/HSP60, NFKBIA, POLR2E and SMAD4. Interacts with host SMC5-SMC6 complex and induces its degradation. Interacts with host TRPC4AP; leading to prevent ubiquitination of TRPC4AP. Interacts with host PLSCR1; this interaction promotes ubiquitination and degradation of HBx and impairs HBx-mediated cell proliferation. A fraction may be phosphorylated in insect cells and HepG2 cells, a human hepatoblastoma cell line. Phosphorylated in vitro by host protein kinase C or mitogen-activated protein kinase. N-acetylated in insect cells.

It is found in the host cytoplasm. Its subcellular location is the host nucleus. The protein localises to the host mitochondrion. Functionally, multifunctional protein that plays a role in silencing host antiviral defenses and promoting viral transcription. Does not seem to be essential for HBV infection. May be directly involved in development of cirrhosis and liver cancer (hepatocellular carcinoma). Most of cytosolic activities involve modulation of cytosolic calcium. The effect on apoptosis is controversial depending on the cell types in which the studies have been conducted. May induce apoptosis by localizing in mitochondria and causing loss of mitochondrial membrane potential. May also modulate apoptosis by binding host CFLAR, a key regulator of the death-inducing signaling complex (DISC). Promotes viral transcription by using the host E3 ubiquitin ligase DDB1 to target the SMC5-SMC6 complex to proteasomal degradation. This host complex would otherwise bind to viral episomal DNA, and prevents its transcription. Moderately stimulates transcription of many different viral and cellular transcription elements. Promoters and enhancers stimulated by HBx contain DNA binding sites for NF-kappa-B, AP-1, AP-2, c-EBP, ATF/CREB, or the calcium-activated factor NF-AT. This chain is Protein X, found in Homo sapiens (Human).